Reading from the N-terminus, the 257-residue chain is Thiazole synthase (257 aa).

Residue K95 is the Schiff-base intermediate with DXP of the active site. 1-deoxy-D-xylulose 5-phosphate contacts are provided by residues G156, 182-183 (AG), and 204-205 (NT).

The protein belongs to the ThiG family. As to quaternary structure, homotetramer. Forms heterodimers with either ThiH or ThiS.

Its subcellular location is the cytoplasm. It carries out the reaction [ThiS sulfur-carrier protein]-C-terminal-Gly-aminoethanethioate + 2-iminoacetate + 1-deoxy-D-xylulose 5-phosphate = [ThiS sulfur-carrier protein]-C-terminal Gly-Gly + 2-[(2R,5Z)-2-carboxy-4-methylthiazol-5(2H)-ylidene]ethyl phosphate + 2 H2O + H(+). It participates in cofactor biosynthesis; thiamine diphosphate biosynthesis. In terms of biological role, catalyzes the rearrangement of 1-deoxy-D-xylulose 5-phosphate (DXP) to produce the thiazole phosphate moiety of thiamine. Sulfur is provided by the thiocarboxylate moiety of the carrier protein ThiS. In vitro, sulfur can be provided by H(2)S. In Vibrio vulnificus (strain CMCP6), this protein is Thiazole synthase.